Consider the following 1009-residue polypeptide: Glutamate receptor ionotropic, delta-1 (1009 aa).

Positions 1–20 are cleaved as a signal peptide; it reads MEALTLWLLPWICQCVSVRA. An interaction with CBLN1 region spans residues 21–436; that stretch reads DSIIHIGAIF…ERPMGSRLQG (416 aa). At 21–562 the chain is on the extracellular side; that stretch reads DSIIHIGAIF…SIFSLFAPFD (542 aa). 3 cysteine pairs are disulfide-bonded: C80-C351, C96-C128, and C294-C306. Residues N131 and N200 are each glycosylated (N-linked (GlcNAc...) asparagine). Residues N422 and N498 are each glycosylated (N-linked (GlcNAc...) asparagine). Positions 527, 530, and 531 each coordinate Ca(2+). Residues 563–583 form a helical membrane-spanning segment; sequence FAVWACIAAAIPVVGVLIFVL. Topologically, residues 584-637 are cytoplasmic; that stretch reads NRIQAVRAQSAAQPRPSASATLHSAIWIVYGAFVQQGGESSVNSMAMRIVMGSW. A helical membrane pass occupies residues 638 to 658; that stretch reads WLFTLIVCSSYTANLAAFLTV. Over 659–830 the chain is Extracellular; it reads SRMDNPIRTF…ADGKSLKLHS (172 aa). 3 residues coordinate Ca(2+): D753, D755, and S757. Residues 831–851 traverse the membrane as a helical segment; sequence FAGVFCILAIGLLLACLVAAL. At 852 to 1009 the chain is on the cytoplasmic side; sequence ELWWNSNRCH…ALDTSHGTSI (158 aa). Over residues 930-942 the composition is skewed to polar residues; the sequence is FLPEQSSHGTSRT. The disordered stretch occupies residues 930–954; that stretch reads FLPEQSSHGTSRTLSSGPSSNLPLP. Over residues 943–954 the composition is skewed to low complexity; sequence LSSGPSSNLPLP.

The protein belongs to the glutamate-gated ion channel (TC 1.A.10.1) family. GRID1 subfamily. As to quaternary structure, homodimer. Interacts (via extracellular N-terminal domain) with CBLN1 (via C1q domain), and more weakly with CBLN2; the interactions mediate the trans-synaptic adhesion complexes also with neurexins and are required for ligand-gated cation channel activity.

It localises to the postsynaptic cell membrane. It carries out the reaction Ca(2+)(in) = Ca(2+)(out). The enzyme catalyses Na(+)(in) = Na(+)(out). Its function is as follows. Member of the ionotropic glutamate receptor family, which plays a crucial role in synaptic organization and signal transduction in the central nervous system. Although it shares structural features with ionotropic glutamate receptors, does not bind glutamate as a primary ligand. Instead, forms trans-synaptic adhesion complexes with presynaptic neurexins and cerebellins, regulating NMDA and AMPA receptor activity and influencing synaptic plasticity through signal transduction. In the presence of neurexins and cerebellins, forms cation-selective channels that are proposed to be gated by glycine and D-serine. However, recent research disputes this ligand-gated cation channel activity. Cation-selective ion channel can be triggered by GRM1 in dopaminergic neurons. Also acts as a receptor for GABA, modulating inhibitory synaptic plasticity through non-ionotropic mechanisms. The protein is Glutamate receptor ionotropic, delta-1 of Homo sapiens (Human).